The primary structure comprises 414 residues: Putative competence-damage inducible protein (414 aa).

Belongs to the CinA family.

The chain is Putative competence-damage inducible protein from Limosilactobacillus fermentum (strain NBRC 3956 / LMG 18251) (Lactobacillus fermentum).